A 199-amino-acid chain; its full sequence is Fe/S biogenesis protein NfuA (199 aa).

Residues Cys-151 and Cys-154 each contribute to the [4Fe-4S] cluster site.

It belongs to the NfuA family. Homodimer. [4Fe-4S] cluster serves as cofactor.

Its function is as follows. Involved in iron-sulfur cluster biogenesis. Binds a 4Fe-4S cluster, can transfer this cluster to apoproteins, and thereby intervenes in the maturation of Fe/S proteins. Could also act as a scaffold/chaperone for damaged Fe/S proteins. This Stenotrophomonas maltophilia (strain R551-3) protein is Fe/S biogenesis protein NfuA.